The sequence spans 591 residues: L-fucose isomerase (591 aa).

Catalysis depends on proton acceptor residues E337 and D361. 3 residues coordinate Mn(2+): E337, D361, and H528.

It belongs to the L-fucose isomerase family. As to quaternary structure, homohexamer. Mn(2+) serves as cofactor.

The protein resides in the cytoplasm. It carries out the reaction L-fucose = L-fuculose. Its pathway is carbohydrate degradation; L-fucose degradation; L-lactaldehyde and glycerone phosphate from L-fucose: step 1/3. Functionally, converts the aldose L-fucose into the corresponding ketose L-fuculose. This is L-fucose isomerase from Escherichia coli (strain SMS-3-5 / SECEC).